Consider the following 396-residue polypeptide: B2 bradykinin receptor (396 aa).

Over 1-65 the chain is Extracellular; the sequence is MDTRSSLCPK…EWWSWLNAIQ (65 aa). 2 N-linked (GlcNAc...) asparagine glycosylation sites follow: Asn33 and Asn44. The helical transmembrane segment at 66–89 threads the bilayer; it reads APFLWVLFLLAALENIFVLSVFCL. At 90–98 the chain is on the cytoplasmic side; sequence HKTNCTVAE. A helical membrane pass occupies residues 99–123; the sequence is IYLGNLAAADLILACGLPFWAITIA. Residues 124 to 136 lie on the Extracellular side of the membrane; that stretch reads NNFDWLFGEVLCR. Residues Cys135 and Cys216 are joined by a disulfide bond. A helical membrane pass occupies residues 137–158; sequence VVNTMIYMNLYSSICFLMLVSI. Residues 159–180 are Cytoplasmic-facing; the sequence is DRYLALVKTMSMGRMRGVRWAK. Tyr161 is subject to Phosphotyrosine. Residues 181-203 traverse the membrane as a helical segment; it reads LYSLVIWSCTLLLSSPMLVFRTM. The Extracellular segment spans residues 204 to 226; it reads KDYREEGHNVTACVIVYPSRSWE. N-linked (GlcNAc...) asparagine glycosylation occurs at Asn212. A helical transmembrane segment spans residues 227-253; sequence VFTNMLLNLVGFLLPLSIITFCTVRIM. The Cytoplasmic segment spans residues 254 to 272; that stretch reads QVLRNNEMKKFKEVQTEKK. The helical transmembrane segment at 273 to 297 threads the bilayer; the sequence is ATVLVLAVLGLFVLCWFPFQISTFL. The Extracellular segment spans residues 298 to 316; the sequence is DTLLRLGVLSGCWNERAVD. The helical transmembrane segment at 317–340 threads the bilayer; that stretch reads IVTQISSYVAYSNSCLNPLVYVIV. Residues 341-396 lie on the Cytoplasmic side of the membrane; it reads GKRFRKKSREVYQAICRKGGCMGESVQMENSMGTLRTSISVDRQIHKLQDWAGNKQ. At Tyr352 the chain carries Phosphotyrosine. A lipid anchor (S-palmitoyl cysteine) is attached at Cys356. Phosphoserine is present on residues Ser365 and Ser371. Position 374 is a phosphothreonine (Thr374). Phosphoserine; by GRK6 is present on residues Ser378 and Ser380.

Belongs to the G-protein coupled receptor 1 family. Bradykinin receptor subfamily. BDKRB2 sub-subfamily. In terms of assembly, forms a complex with PECAM1 and GNAQ. Interacts with PECAM1. In terms of processing, diphosphorylation at Ser-365 and Ser-371, at Ser-378 and Ser-380, and at Thr-374 and Ser-380 seem to be correlated pairwise. Post-translationally, palmitoylation at Cys-356 and phosphorylation at Tyr-352 seem to be mutually exclusive. Uterus, vas deferens, kidney, ileum, heart, testis, lung and brain.

The protein resides in the cell membrane. In terms of biological role, receptor for bradykinin. It is associated with G proteins that activate a phosphatidylinositol-calcium second messenger system. The protein is B2 bradykinin receptor (Bdkrb2) of Rattus norvegicus (Rat).